The sequence spans 308 residues: ATP synthase gamma chain (308 aa).

Belongs to the ATPase gamma chain family. As to quaternary structure, F-type ATPases have 2 components, CF(1) - the catalytic core - and CF(0) - the membrane proton channel. CF(1) has five subunits: alpha(3), beta(3), gamma(1), delta(1), epsilon(1). CF(0) has three main subunits: a, b and c.

The protein localises to the cell membrane. In terms of biological role, produces ATP from ADP in the presence of a proton gradient across the membrane. The gamma chain is believed to be important in regulating ATPase activity and the flow of protons through the CF(0) complex. The protein is ATP synthase gamma chain of Saccharopolyspora erythraea (strain ATCC 11635 / DSM 40517 / JCM 4748 / NBRC 13426 / NCIMB 8594 / NRRL 2338).